Reading from the N-terminus, the 296-residue chain is Fructose-bisphosphate aldolase class 1 (296 aa).

The Proton acceptor role is filled by E175. Residue K212 is the Schiff-base intermediate with dihydroxyacetone-P of the active site.

It belongs to the class I fructose-bisphosphate aldolase family.

It carries out the reaction beta-D-fructose 1,6-bisphosphate = D-glyceraldehyde 3-phosphate + dihydroxyacetone phosphate. Its pathway is carbohydrate degradation; glycolysis; D-glyceraldehyde 3-phosphate and glycerone phosphate from D-glucose: step 4/4. The protein is Fructose-bisphosphate aldolase class 1 (fda) of Staphylococcus carnosus (strain TM300).